Here is an 83-residue protein sequence, read N- to C-terminus: MLGINVEKSNENLIINWQLSKIEIPIKEINDVFLDPNYGGEEKSAVRIGFPYGSTDRVVIKTARNTYILFTTNPALIMSKIVS.

The protein belongs to the UPF0457 family.

This chain is UPF0457 protein YnzG (ynzG), found in Bacillus subtilis (strain 168).